Consider the following 152-residue polypeptide: Small ribosomal subunit protein uS8m (152 aa).

This sequence belongs to the universal ribosomal protein uS8 family.

It is found in the mitochondrion. The sequence is that of Small ribosomal subunit protein uS8m (mrps8) from Dictyostelium discoideum (Social amoeba).